The chain runs to 362 residues: Phosphoserine aminotransferase (362 aa).

L-glutamate is bound by residues Ser9 and Arg42. Pyridoxal 5'-phosphate is bound by residues 76 to 77, Trp102, Thr153, Asp174, and Gln197; that span reads GR. Position 198 is an N6-(pyridoxal phosphate)lysine (Lys198). Position 239–240 (239–240) interacts with pyridoxal 5'-phosphate; it reads NT.

It belongs to the class-V pyridoxal-phosphate-dependent aminotransferase family. SerC subfamily. In terms of assembly, homodimer. Pyridoxal 5'-phosphate is required as a cofactor.

The protein localises to the cytoplasm. It catalyses the reaction O-phospho-L-serine + 2-oxoglutarate = 3-phosphooxypyruvate + L-glutamate. The catalysed reaction is 4-(phosphooxy)-L-threonine + 2-oxoglutarate = (R)-3-hydroxy-2-oxo-4-phosphooxybutanoate + L-glutamate. It functions in the pathway amino-acid biosynthesis; L-serine biosynthesis; L-serine from 3-phospho-D-glycerate: step 2/3. It participates in cofactor biosynthesis; pyridoxine 5'-phosphate biosynthesis; pyridoxine 5'-phosphate from D-erythrose 4-phosphate: step 3/5. Its function is as follows. Catalyzes the reversible conversion of 3-phosphohydroxypyruvate to phosphoserine and of 3-hydroxy-2-oxo-4-phosphonooxybutanoate to phosphohydroxythreonine. The sequence is that of Phosphoserine aminotransferase from Escherichia coli O7:K1 (strain IAI39 / ExPEC).